A 202-amino-acid polypeptide reads, in one-letter code: dITP/XTP pyrophosphatase (202 aa).

8-13 (TKNMGK) provides a ligand contact to substrate. 2 residues coordinate Mg(2+): E41 and D70. The active-site Proton acceptor is D70. Residues S71, 155-158 (FGYD), K178, and 183-184 (HR) each bind substrate.

The protein belongs to the HAM1 NTPase family. As to quaternary structure, homodimer. Mg(2+) is required as a cofactor.

It catalyses the reaction XTP + H2O = XMP + diphosphate + H(+). The enzyme catalyses dITP + H2O = dIMP + diphosphate + H(+). It carries out the reaction ITP + H2O = IMP + diphosphate + H(+). In terms of biological role, pyrophosphatase that catalyzes the hydrolysis of nucleoside triphosphates to their monophosphate derivatives, with a high preference for the non-canonical purine nucleotides XTP (xanthosine triphosphate), dITP (deoxyinosine triphosphate) and ITP. Seems to function as a house-cleaning enzyme that removes non-canonical purine nucleotides from the nucleotide pool, thus preventing their incorporation into DNA/RNA and avoiding chromosomal lesions. The sequence is that of dITP/XTP pyrophosphatase from Bacillus anthracis.